The chain runs to 189 residues: Peptidyl-tRNA hydrolase (189 aa).

Tyrosine 14 serves as a coordination point for tRNA. The Proton acceptor role is filled by histidine 19. Positions 64, 66, and 112 each coordinate tRNA.

Belongs to the PTH family. In terms of assembly, monomer.

The protein localises to the cytoplasm. It catalyses the reaction an N-acyl-L-alpha-aminoacyl-tRNA + H2O = an N-acyl-L-amino acid + a tRNA + H(+). Its function is as follows. Hydrolyzes ribosome-free peptidyl-tRNAs (with 1 or more amino acids incorporated), which drop off the ribosome during protein synthesis, or as a result of ribosome stalling. Functionally, catalyzes the release of premature peptidyl moieties from peptidyl-tRNA molecules trapped in stalled 50S ribosomal subunits, and thus maintains levels of free tRNAs and 50S ribosomes. The sequence is that of Peptidyl-tRNA hydrolase from Zymomonas mobilis subsp. mobilis (strain ATCC 31821 / ZM4 / CP4).